The sequence spans 71 residues: Conotoxin Lt11.3 (71 aa).

The N-terminal stretch at 1–26 (MMFRLTSVGCILLVIAFLNLVGLTNA) is a signal peptide. Intrachain disulfides connect cysteine 27–cysteine 41, cysteine 34–cysteine 46, cysteine 40–cysteine 50, and cysteine 45–cysteine 54. Proline 57 is modified (proline amide). Residues 61–71 (TRLQGFFKHRR) constitute a propeptide that is removed on maturation.

Belongs to the conotoxin I2 superfamily. Expressed by the venom duct.

The protein resides in the secreted. Probable neurotoxin. The protein is Conotoxin Lt11.3 of Conus litteratus (Lettered cone).